A 231-amino-acid chain; its full sequence is Orotidine 5'-phosphate decarboxylase (231 aa).

Substrate-binding positions include Asp11, Lys33, 60 to 69 (DLKFHDIPNT), Thr120, Arg181, Gln190, Gly210, and Arg211. The active-site Proton donor is the Lys62.

Belongs to the OMP decarboxylase family. Type 1 subfamily. As to quaternary structure, homodimer.

The catalysed reaction is orotidine 5'-phosphate + H(+) = UMP + CO2. The protein operates within pyrimidine metabolism; UMP biosynthesis via de novo pathway; UMP from orotate: step 2/2. Functionally, catalyzes the decarboxylation of orotidine 5'-monophosphate (OMP) to uridine 5'-monophosphate (UMP). The chain is Orotidine 5'-phosphate decarboxylase from Vibrio atlanticus (strain LGP32) (Vibrio splendidus (strain Mel32)).